We begin with the raw amino-acid sequence, 333 residues long: Taste receptor type 2 member 38 (333 aa).

Topologically, residues 1–17 (MLTLTRIHTVSYEVRST) are extracellular. Residues 18 to 38 (FLFISVLEFAVGFLTNAFVFL) form a helical membrane-spanning segment. Topologically, residues 39 to 55 (VNFWDVVKRQPLSNSDC) are cytoplasmic. Residues 56–76 (VLLCLSISRLFLHGLLFLSAI) traverse the membrane as a helical segment. The Extracellular segment spans residues 77-94 (QLTHFQKLSEPLNHSYQA). The chain crosses the membrane as a helical span at residues 95–115 (INMLWMIANQANLWLAACLSL). At 116–142 (LYCSKLIRFSHTFLICLASWVSRKISQ) the chain is on the cytoplasmic side. Residues 143 to 163 (MLLGIILCSCICTVLCVWCFF) form a helical membrane-spanning segment. Residues 164-190 (SRPHFTVTTVLFMNNNTRLNWQIKDLN) are Extracellular-facing. N-linked (GlcNAc...) asparagine glycosylation occurs at N178. The helical transmembrane segment at 191–211 (LFYSFLFCYLWSVPPFLLFLV) threads the bilayer. Over 212–251 (SSGMLTVSLGRHMRTMKVYTRDSRDPSLEAHIKALKSLVS) the chain is Cytoplasmic. A helical membrane pass occupies residues 252 to 272 (FFCFFVISSCAAFISVPLLIL). Residues 273-276 (WRDK) lie on the Extracellular side of the membrane. A helical membrane pass occupies residues 277-297 (IGVMVCVGIMAACPSGHAAVL). Residues 298-333 (ISGNAKLRRAVTTILLWAQSSLKVRADHKADSRTLC) lie on the Cytoplasmic side of the membrane.

Belongs to the G-protein coupled receptor T2R family.

The protein resides in the membrane. Receptor that may play a role in the perception of bitterness and is gustducin-linked. May play a role in sensing the chemical composition of the gastrointestinal content. The activity of this receptor may stimulate alpha gustducin, mediate PLC-beta-2 activation and lead to the gating of TRPM5. The sequence is that of Taste receptor type 2 member 38 (TAS2R38) from Pan paniscus (Pygmy chimpanzee).